The sequence spans 465 residues: Ubiquitin carboxyl-terminal hydrolase UCH54 (465 aa).

The UCH catalytic domain maps to 11 to 333 (EWCLIESNPC…VRFNIIAVMK (323 aa)). Residue C145 is the Nucleophile of the active site. H220 acts as the Proton donor in catalysis. A disordered region spans residues 244 to 293 (INADEQNKPNPNNNNNNKDNDNDNNNNNNNNNNNNNNNNNNNNNNNNNNI). A compositionally biased stretch (low complexity) spans 251-292 (KPNPNNNNNNKDNDNDNNNNNNNNNNNNNNNNNNNNNNNNNN). Positions 432–460 (NFYPFIMSSLNLMAKHKLLKDAYQKEKLK) constitute a ULD domain.

This sequence belongs to the peptidase C12 family.

It carries out the reaction Thiol-dependent hydrolysis of ester, thioester, amide, peptide and isopeptide bonds formed by the C-terminal Gly of ubiquitin (a 76-residue protein attached to proteins as an intracellular targeting signal).. Its function is as follows. Thiol protease that recognizes and hydrolyzes a peptide bond at the C-terminal glycine of either ubiquitin or NEDD8. The sequence is that of Ubiquitin carboxyl-terminal hydrolase UCH54 from Plasmodium falciparum (isolate 3D7).